An 883-amino-acid chain; its full sequence is Ankyrin repeat and SAM domain-containing protein 6 (883 aa).

ANK repeat units follow at residues 8 to 37 (PGLQ…DPVA), 68 to 97 (AGNS…SVNS), 101 to 130 (YGWS…DVNA), 134 to 163 (LGAS…IVDH), 181 to 210 (LGIT…DPNH), 215 to 244 (VGWS…NPDH), 282 to 312 (KRRP…HVNL), 316 to 345 (DGAT…DMDK), 350 to 379 (HGWT…DVAL), and 383 to 414 (NGYT…QVNK). Residues 30–50 (EPGADPVAGPEAGAEPAGPEA) are disordered. Disordered stretches follow at residues 414–439 (KDRG…IPVL), 490–522 (MRAP…RREK), 566–773 (SHTC…ITDE), and 852–883 (SFES…SSRR). Over residues 566 to 576 (SHTCHNGKADP) the composition is skewed to basic and acidic residues. Residues 607 to 630 (PSISRSPASPASSGSFNHSPHSSG) show a composition bias toward low complexity. Residues 631 to 640 (GASGIGGMSR) show a composition bias toward gly residues. At Ser649 the chain carries Phosphoserine. Residues 649–661 (SGGSVDSVLSQIA) are compositionally biased toward polar residues. Composition is skewed to low complexity over residues 687 to 711 (SSSP…PSSS) and 720 to 737 (PPSG…TLTP). Phosphoserine occurs at positions 732 and 740. A compositionally biased stretch (low complexity) spans 748-768 (SSVSSSSSHRQSKSSGGSSSG). Residues 771-834 (TDEDELTGIL…LAAISELNAG (64 aa)) form the SAM domain. Residues 852–862 (SFESSASNTRA) show a composition bias toward polar residues. Basic and acidic residues predominate over residues 874-883 (RPEETVSSRR).

As to quaternary structure, homooligomer. Interacts with NEK8. Central component of a complex containing at least ANKS6, INVS, NEK8 and NPHP3. ANKS6 may organize complex assembly by linking INVS and NPHP3 to NEK8 and INVS may target the complex to the proximal ciliary axoneme. Interacts (via SAM domain) with BICC1 (via KH domains) in an RNA-dependent manner. Interacts (via SAM domain) with ANKS3 (via SAM domain). Hydroxylated at Asn-129, most probably by HIF1AN. This hydroxylation results in decreased NEK8-binding. In terms of tissue distribution, expressed in kidney (at protein level).

The protein resides in the cell projection. The protein localises to the cilium. Its subcellular location is the cytoplasm. In terms of biological role, required for renal function. In Mus musculus (Mouse), this protein is Ankyrin repeat and SAM domain-containing protein 6 (Anks6).